The following is a 168-amino-acid chain: G/U mismatch-specific DNA glycosylase (168 aa).

The protein belongs to the uracil-DNA glycosylase (UDG) superfamily. TDG/mug family. Binds DNA as a monomer.

Its subcellular location is the cytoplasm. It carries out the reaction Specifically hydrolyzes mismatched double-stranded DNA and polynucleotides, releasing free uracil.. In terms of biological role, excises ethenocytosine and uracil, which can arise by alkylation or deamination of cytosine, respectively, from the corresponding mispairs with guanine in ds-DNA. It is capable of hydrolyzing the carbon-nitrogen bond between the sugar-phosphate backbone of the DNA and the mispaired base. The complementary strand guanine functions in substrate recognition. Required for DNA damage lesion repair in stationary-phase cells. In Salmonella agona (strain SL483), this protein is G/U mismatch-specific DNA glycosylase.